A 73-amino-acid chain; its full sequence is Large ribosomal subunit protein bL28 (73 aa).

This sequence belongs to the bacterial ribosomal protein bL28 family.

This Anaeromyxobacter dehalogenans (strain 2CP-1 / ATCC BAA-258) protein is Large ribosomal subunit protein bL28.